Reading from the N-terminus, the 75-residue chain is Metallothionein-like protein 1 (75 aa).

The protein belongs to the metallothionein superfamily. Type 15 family.

Functionally, metallothioneins have a high content of cysteine residues that bind various heavy metals. The sequence is that of Metallothionein-like protein 1 (MT1B) from Trifolium repens (Creeping white clover).